The sequence spans 224 residues: Deoxyribose-phosphate aldolase (224 aa).

Asp-92 serves as the catalytic Proton donor/acceptor. Lys-154 serves as the catalytic Schiff-base intermediate with acetaldehyde. Lys-183 functions as the Proton donor/acceptor in the catalytic mechanism.

It belongs to the DeoC/FbaB aldolase family. DeoC type 1 subfamily.

It is found in the cytoplasm. It carries out the reaction 2-deoxy-D-ribose 5-phosphate = D-glyceraldehyde 3-phosphate + acetaldehyde. It participates in carbohydrate degradation; 2-deoxy-D-ribose 1-phosphate degradation; D-glyceraldehyde 3-phosphate and acetaldehyde from 2-deoxy-alpha-D-ribose 1-phosphate: step 2/2. In terms of biological role, catalyzes a reversible aldol reaction between acetaldehyde and D-glyceraldehyde 3-phosphate to generate 2-deoxy-D-ribose 5-phosphate. This Mannheimia succiniciproducens (strain KCTC 0769BP / MBEL55E) protein is Deoxyribose-phosphate aldolase.